Consider the following 64-residue polypeptide: UPF0337 protein SAR0874 (64 aa).

Residues 1–40 (MADESKFEQAKGNVKETVGNVTDNKNLENEGKEDKASGKA) are disordered. Over residues 25–40 (KNLENEGKEDKASGKA) the composition is skewed to basic and acidic residues.

Belongs to the UPF0337 (CsbD) family.

The sequence is that of UPF0337 protein SAR0874 from Staphylococcus aureus (strain MRSA252).